The sequence spans 315 residues: DNA-directed RNA polymerase subunit alpha (315 aa).

The segment at 1 to 228 (MLEIEKPKIE…EHFKLFMTLT (228 aa)) is alpha N-terminal domain (alpha-NTD). The tract at residues 245 to 315 (KEKVLEMTIE…LGLSLKLNDE (71 aa)) is alpha C-terminal domain (alpha-CTD).

This sequence belongs to the RNA polymerase alpha chain family. In terms of assembly, homodimer. The RNAP catalytic core consists of 2 alpha, 1 beta, 1 beta' and 1 omega subunit. When a sigma factor is associated with the core the holoenzyme is formed, which can initiate transcription.

The enzyme catalyses RNA(n) + a ribonucleoside 5'-triphosphate = RNA(n+1) + diphosphate. In terms of biological role, DNA-dependent RNA polymerase catalyzes the transcription of DNA into RNA using the four ribonucleoside triphosphates as substrates. The sequence is that of DNA-directed RNA polymerase subunit alpha from Clostridium acetobutylicum (strain ATCC 824 / DSM 792 / JCM 1419 / IAM 19013 / LMG 5710 / NBRC 13948 / NRRL B-527 / VKM B-1787 / 2291 / W).